The primary structure comprises 59 residues: Bdellastasin (59 aa).

5 cysteine pairs are disulfide-bonded: cysteine 10–cysteine 21, cysteine 15–cysteine 26, cysteine 28–cysteine 48, cysteine 33–cysteine 52, and cysteine 37–cysteine 54. An Antistasin-like domain is found at 28–54 (CSDLHCKVKCEHGFKKDDNGCEYACIC).

It localises to the secreted. Its function is as follows. Strong inhibitor of mammalian trypsin, plasmin and acrosin. The chain is Bdellastasin from Hirudo medicinalis (Medicinal leech).